The primary structure comprises 341 residues: MIKQAIEKVVNHENLTFEESEAVLDEIMNGEASEVQTASLLTALTAKNPTIDEIAGAAASMRSHALAFPETKDVLEIVGTGGDHANTFNISTTSAIVVAATGTQVAKHGNRAASSKSGAADVLEALGLDINETPAVSYESLQENNLAFLFAQEYHKSMKYVATVRKQLGFRTIFNILGPLANPAHPTHQLLGVYDETLLEPLANVLKKLGVTNAMVVHGRDGLDEMTTADETAVVELQDDHLTKYTVTPEQFGLKRRQRADLVGGTPEANADITRRILAGDHGPQRDIVLLNAGAALHVAHPALSIQAGIDLAAKTIDDGKAFEELNRLLAFSDKRKDVVA.

Residues G79, 82–83 (GD), T87, 89–92 (NIST), 107–115 (KHGNRAASS), and A119 contribute to the 5-phospho-alpha-D-ribose 1-diphosphate site. Residue G79 participates in anthranilate binding. S91 is a binding site for Mg(2+). Anthranilate is bound at residue N110. An anthranilate-binding site is contributed by R165. Residues D224 and E225 each coordinate Mg(2+).

Belongs to the anthranilate phosphoribosyltransferase family. Homodimer. It depends on Mg(2+) as a cofactor.

It carries out the reaction N-(5-phospho-beta-D-ribosyl)anthranilate + diphosphate = 5-phospho-alpha-D-ribose 1-diphosphate + anthranilate. Its pathway is amino-acid biosynthesis; L-tryptophan biosynthesis; L-tryptophan from chorismate: step 2/5. Functionally, catalyzes the transfer of the phosphoribosyl group of 5-phosphorylribose-1-pyrophosphate (PRPP) to anthranilate to yield N-(5'-phosphoribosyl)-anthranilate (PRA). The protein is Anthranilate phosphoribosyltransferase of Lacticaseibacillus paracasei (strain ATCC 334 / BCRC 17002 / CCUG 31169 / CIP 107868 / KCTC 3260 / NRRL B-441) (Lactobacillus paracasei).